A 200-amino-acid polypeptide reads, in one-letter code: Putative protein ATXN8OS (200 aa).

The segment at 19-39 is disordered; sequence PFSGLKEEEEEDGEDDEEEEE. Acidic residues predominate over residues 25–39; that stretch reads EEEEEDGEDDEEEEE.

As to expression, expressed in brain. Expressed in muscle tissues (at protein level).

It is found in the cytoplasm. The protein is Putative protein ATXN8OS of Homo sapiens (Human).